A 375-amino-acid polypeptide reads, in one-letter code: Putative glycyl-radical enzyme activating enzyme MJ0021 (375 aa).

Residues 23 to 246 (QCVKGGKLVL…LKVIKEFKGD (224 aa)) enclose the Radical SAM core domain. 3 residues coordinate [4Fe-4S] cluster: C38, C42, and C45. S-adenosyl-L-methionine is bound by residues 44 to 46 (YCP) and G87.

This sequence belongs to the organic radical-activating enzymes family. [4Fe-4S] cluster serves as cofactor.

The catalysed reaction is glycyl-[protein] + reduced [flavodoxin] + S-adenosyl-L-methionine = glycin-2-yl radical-[protein] + semiquinone [flavodoxin] + 5'-deoxyadenosine + L-methionine + H(+). The polypeptide is Putative glycyl-radical enzyme activating enzyme MJ0021 (Methanocaldococcus jannaschii (strain ATCC 43067 / DSM 2661 / JAL-1 / JCM 10045 / NBRC 100440) (Methanococcus jannaschii)).